The primary structure comprises 2210 residues: Filamin-A (2210 aa).

Calponin-homology (CH) domains are found at residues 15–120 (KIQQ…LHYS) and 139–242 (HTPK…NSKL). Filamin repeat units follow at residues 249 to 347 (RPKT…PVKV), 349 to 447 (GHAG…PVKV), 448 to 544 (APLS…EVKV), 545 to 635 (GPKK…IAQI), 638 to 734 (RTDF…RVYV), 735 to 831 (GVPV…VVVE), 832 to 929 (QTVD…VVNV), 930 to 1022 (KSGC…RVLV), 1023 to 1121 (EETV…VMTV), 1122 to 1217 (FPKS…KLEA), 1218 to 1312 (FPTG…SIKA), 1322 to 1423 (SEYI…KFHV), 1424 to 1515 (DSIT…FAKI), 1516 to 1603 (TGEG…KVTV), 1606 to 1698 (REVG…TVKV), 1699 to 1796 (AGEG…QFTV), 1799 to 1891 (LRDS…KVYV), 1893 to 1986 (PDAG…RIKV), 1988 to 2079 (KDVA…KVNA), and 2116 to 2210 (TFKS…QIDV).

This sequence belongs to the filamin family. Interacts with Ten-m. Germline-specific in females (at protein level). Expressed in ovary.

The protein resides in the cytoplasm. Its subcellular location is the cytoskeleton. It is found in the cell membrane. Functionally, involved in the germline ring canal formation. May tether actin microfilament within the ovarian ring canal to the cell membrane. Contributes to actin microfilaments organization. The polypeptide is Filamin-A (cher) (Drosophila melanogaster (Fruit fly)).